A 547-amino-acid polypeptide reads, in one-letter code: G protein-coupled receptor associated sorting protein 3 (547 aa).

The span at 1–10 (MAGTKNKTRA) shows a compositional bias: basic residues. Disordered regions lie at residues 1–32 (MAGT…EATG) and 80–102 (TLGK…STCK).

Belongs to the GPRASP family. Homodimer. Highly expressed in brain. Not expressed in lung or liver. Down-regulated in brain from patients suffering from Alzheimer disease.

Its subcellular location is the cytoplasm. The protein resides in the nucleus. Functionally, survival and differentiation promoting protein that plays a role in the regulation of neurosynaptogenesis. Induces phosphatase PP2A activity which results in APP dephosphorylation and inhibits BACE1-mediated processing of APP. The chain is G protein-coupled receptor associated sorting protein 3 from Homo sapiens (Human).